The primary structure comprises 1793 residues: Non-reducing polyketide synthase adaA (1793 aa).

The N-terminal acylcarrier protein transacylase domain (SAT) stretch occupies residues 16-250; that stretch reads NDDLKALFRG…YSKSLALPVY (235 aa). One can recognise a Ketosynthase family 3 (KS3) domain in the interval 388-821; the sequence is DSKLAIVGMA…GGNTTLVLED (434 aa). Residues Cys-561, His-696, and His-739 each act as for beta-ketoacyl synthase activity in the active site. The tract at residues 923–1245 is malonyl-CoA:ACP transacylase (MAT) domain; sequence VFTFTGQGAY…KSLCTLHLAG (323 aa). Residues 1312–1634 form a product template (PT) domain region; it reads TSLIHQVTEE…RLLMDRFFSP (323 aa). The interval 1316-1452 is N-terminal hotdog fold; it reads HQVTEETVDK…GSIKYPADPT (137 aa). The 314-residue stretch at 1316-1629 folds into the PKS/mFAS DH domain; the sequence is HQVTEETVDK…FRRVPRLLMD (314 aa). The active-site Proton acceptor; for dehydratase activity is His-1348. Positions 1482–1629 are C-terminal hotdog fold; sequence KASTLSKPLA…FRRVPRLLMD (148 aa). The active-site Proton donor; for dehydratase activity is the Asp-1540. Over residues 1642 to 1659 the composition is skewed to low complexity; sequence AAPAPAPAAVPAVKKQPP. Positions 1642-1714 are disordered; sequence AAPAPAPAAV…TTEQEAPVAD (73 aa). Over residues 1660-1681 the composition is skewed to polar residues; it reads TETIQPQAPKTEQKQDQLQLPN. The span at 1683 to 1706 shows a compositional bias: low complexity; it reads ASAAPSTANSSSSPSSSGVATPTT. Residues 1716 to 1793 enclose the Carrier domain; it reads SAVTGVAGKC…DLTGWLEQYC (78 aa). Position 1753 is an O-(pantetheine 4'-phosphoryl)serine (Ser-1753).

Pantetheine 4'-phosphate serves as cofactor.

It carries out the reaction holo-[ACP] + 9 malonyl-CoA + acetyl-CoA + 9 H(+) = 3-(2,4-dioxopentyl)-3,6,8,9-tetrahydroxy-1-oxo-1,2,3,4-tetrahydroanthracene-2-carboxyl-[ACP] + 9 CO2 + 10 CoA + 2 H2O. It participates in secondary metabolite biosynthesis. Its function is as follows. Non-reducing polyketide synthase; part of the gene cluster that mediates the biosynthesis of the linear tetracyclic TAN-1612 neuropeptide Y receptor antagonist. The decaketide backbone of TAN-1612 is synthesized by the non-reducing polyketide synthase adaA via condensation of one acetyl-CoA starter unit with 9 malonyl-CoA units. The FAD-dependent monooxygenase adaC then performs hydroxylation at C2 while the polaketide chain is still attached to the NRPKS adaA. The alpha-hydroxylation step at C2 appears to be crucial for the following C18-C1 Claisen cyclization and release of the C9-hydroxyl version of TAN-1612 from the NRPKS adaA, two steps performed by the lactamase-like protein adaB. Finally, the O-methyltransferase adaD performs the C9 O-methylation to complete the biosynthesis of TAN-1612. The protein is Non-reducing polyketide synthase adaA of Aspergillus niger (strain ATCC MYA-4892 / CBS 513.88 / FGSC A1513).